A 340-amino-acid polypeptide reads, in one-letter code: Glyceraldehyde-3-phosphate dehydrogenase (340 aa).

Residues 11 to 12 (TI) and G109 contribute to the NAD(+) site. Residue 138-140 (SCN) coordinates D-glyceraldehyde 3-phosphate. Catalysis depends on C139, which acts as the Nucleophile. Residue R167 coordinates NAD(+). 193–194 (HA) contributes to the D-glyceraldehyde 3-phosphate binding site. Residue Q300 participates in NAD(+) binding.

It belongs to the glyceraldehyde-3-phosphate dehydrogenase family. As to quaternary structure, homotetramer.

It localises to the cytoplasm. It catalyses the reaction D-glyceraldehyde 3-phosphate + phosphate + NADP(+) = (2R)-3-phospho-glyceroyl phosphate + NADPH + H(+). The catalysed reaction is D-glyceraldehyde 3-phosphate + phosphate + NAD(+) = (2R)-3-phospho-glyceroyl phosphate + NADH + H(+). The protein operates within carbohydrate degradation; glycolysis; pyruvate from D-glyceraldehyde 3-phosphate: step 1/5. This Saccharolobus islandicus (strain Y.N.15.51 / Yellowstone #2) (Sulfolobus islandicus) protein is Glyceraldehyde-3-phosphate dehydrogenase.